Reading from the N-terminus, the 471-residue chain is Putative metabolite transport protein YncC (471 aa).

Transmembrane regions (helical) follow at residues 13–33 (LIMI…GVIN), 50–70 (VTEG…ALLC), 88–108 (FLFF…IMAV), 111–131 (FLLG…LAEM), 146–166 (LMIV…GVTM), 175–195 (YMLV…LKVP), 256–276 (LLWI…NSIM), 295–315 (IANI…IWLV), 323–343 (ILLI…IFSI), 358–378 (LTVL…WLVI), 393–413 (ISVF…PILL), and 416–436 (VGLS…IGFV).

The protein belongs to the major facilitator superfamily. Sugar transporter (TC 2.A.1.1) family.

The protein localises to the cell membrane. The chain is Putative metabolite transport protein YncC (yncC) from Bacillus subtilis (strain 168).